The primary structure comprises 282 residues: Exo-glucosaminidase LytG (282 aa).

Positions 1–29 are cleaved as a signal peptide; sequence MARKKLKKRKLLISLFFLVSIPLALFVLA. Residues 203-281 enclose the GW domain; it reads SLKSVDLNAS…DDSAVEIKEA (79 aa).

It belongs to the glycosyl hydrolase 73 family. Mg(2+) is required as a cofactor.

The protein resides in the secreted. Its subcellular location is the cell wall. With respect to regulation, inhibited by EDTA. In terms of biological role, is the major glucosaminidase responsible for peptidoglycan structural determination during vegetative growth. Catalyzes the hydrolysis of 1,4-beta-linkages between N-acetyl-D-glucosamine and N-acetylmuramic acid residues in peptidoglycan. Acts processively from the ends of the glycan strands. Also plays a role in motility, chemotaxis and cell division. The polypeptide is Exo-glucosaminidase LytG (lytG) (Bacillus subtilis (strain 168)).